A 430-amino-acid chain; its full sequence is Enolase (430 aa).

Q167 is a binding site for (2R)-2-phosphoglycerate. Catalysis depends on E209, which acts as the Proton donor. Mg(2+) contacts are provided by D246, E287, and D314. 4 residues coordinate (2R)-2-phosphoglycerate: K339, R368, S369, and K390. K339 (proton acceptor) is an active-site residue.

It belongs to the enolase family. Mg(2+) serves as cofactor.

The protein localises to the cytoplasm. The protein resides in the secreted. It localises to the cell surface. The enzyme catalyses (2R)-2-phosphoglycerate = phosphoenolpyruvate + H2O. Its pathway is carbohydrate degradation; glycolysis; pyruvate from D-glyceraldehyde 3-phosphate: step 4/5. In terms of biological role, catalyzes the reversible conversion of 2-phosphoglycerate (2-PG) into phosphoenolpyruvate (PEP). It is essential for the degradation of carbohydrates via glycolysis. This chain is Enolase, found in Prochlorococcus marinus (strain MIT 9515).